Here is a 189-residue protein sequence, read N- to C-terminus: Fucolectin-5 (189 aa).

The N-terminal stretch at 1–31 (MKTCNLTDRMKVKMIMLLFQILAISTLQSDS) is a signal peptide. The F5/8 type C-like stretch occupies residues 40 to 189 (QENVAVRGKA…VEVNALLPAN (150 aa)). Residues Asp70, Asn72, and Ser81 each contribute to the Ca(2+) site. Cystine bridges form between Cys82/Cys178, Cys114/Cys115, and Cys140/Cys156. Alpha-L-fucose-binding residues include His84 and Arg111. The Cell attachment site motif lies at 111–113 (RGD). Arg118 is an alpha-L-fucose binding site. Ca(2+) contacts are provided by Cys178 and Glu179.

Belongs to the fucolectin family. In terms of assembly, homotrimer. Gill mucous cells.

The protein localises to the secreted. Its function is as follows. Acts as a defensive agent. Recognizes blood group fucosylated oligosaccharides including A, B, H and Lewis B-type antigens. Does not recognize Lewis A antigen and has low affinity for monovalent haptens. This chain is Fucolectin-5, found in Anguilla japonica (Japanese eel).